The chain runs to 286 residues: Beta-lactamase SHV-1 (286 aa).

An N-terminal signal peptide occupies residues 1–21 (MRYIRLCIISLLATLPLAVHA). The active-site Acyl-ester intermediate is Ser-66. The cysteines at positions 73 and 119 are disulfide-linked. The active-site Proton acceptor is the Glu-164. 230–232 (KTG) contributes to the substrate binding site.

The protein belongs to the class-A beta-lactamase family.

The catalysed reaction is a beta-lactam + H2O = a substituted beta-amino acid. This chain is Beta-lactamase SHV-1 (bla), found in Escherichia coli.